The chain runs to 119 residues: DNA-binding protein inhibitor ID-3 (119 aa).

The region spanning 28–80 (RGKGPAAEEPLSLLDDMNHCYSRLRELVPGVPRGTQLSQVEILQRVIDYILDL) is the bHLH domain.

In terms of assembly, homodimer, and heterodimer with other HLH proteins. Interacts with COPS5 and COPS7A. Interacts with IFI204. Interacts with GATA4 and NKX2-5. Interacts with ANKRD2; both proteins cooperate in myoblast differentiation. Interacts with CLOCK and BMAL1.

It is found in the nucleus. Transcriptional regulator (lacking a basic DNA binding domain) which negatively regulates the basic helix-loop-helix (bHLH) transcription factors by forming heterodimers and inhibiting their DNA binding and transcriptional activity. Implicated in regulating a variety of cellular processes, including cellular growth, senescence, differentiation, apoptosis, angiogenesis, and neoplastic transformation. Involved in myogenesis by inhibiting skeletal muscle and cardiac myocyte differentiation and promoting muscle precursor cells proliferation. Inhibits the binding of E2A-containing protein complexes to muscle creatine kinase E-box enhancer. Regulates the circadian clock by repressing the transcriptional activator activity of the CLOCK-BMAL1 heterodimer. The sequence is that of DNA-binding protein inhibitor ID-3 (ID3) from Canis lupus familiaris (Dog).